We begin with the raw amino-acid sequence, 279 residues long: Large ribosomal subunit protein uL2 (279 aa).

Residues 202 to 279 are disordered; that stretch reads NASIGKAGRS…TSRHKSKKKG (78 aa). Residues 209–220 are compositionally biased toward basic residues; the sequence is GRSRWLGRRPHN.

It belongs to the universal ribosomal protein uL2 family. In terms of assembly, part of the 50S ribosomal subunit. Forms a bridge to the 30S subunit in the 70S ribosome.

In terms of biological role, one of the primary rRNA binding proteins. Required for association of the 30S and 50S subunits to form the 70S ribosome, for tRNA binding and peptide bond formation. It has been suggested to have peptidyltransferase activity; this is somewhat controversial. Makes several contacts with the 16S rRNA in the 70S ribosome. This chain is Large ribosomal subunit protein uL2, found in Methylocella silvestris (strain DSM 15510 / CIP 108128 / LMG 27833 / NCIMB 13906 / BL2).